The sequence spans 413 residues: Histidine--tRNA ligase (413 aa).

It belongs to the class-II aminoacyl-tRNA synthetase family.

The protein resides in the cytoplasm. The catalysed reaction is tRNA(His) + L-histidine + ATP = L-histidyl-tRNA(His) + AMP + diphosphate + H(+). In Methanosarcina acetivorans (strain ATCC 35395 / DSM 2834 / JCM 12185 / C2A), this protein is Histidine--tRNA ligase.